A 691-amino-acid polypeptide reads, in one-letter code: Lacticin-481/lactococcin-DR transport/processing ATP-binding protein lcnDR3 (691 aa).

Residues 6 to 130 (QNNEQDCLLA…KKFSGYIITL (125 aa)) enclose the Peptidase C39 domain. The active site involves Cys-12. Residues 158-434 (TFLYIFSLFI…IQDVMFEISR (277 aa)) form the ABC transmembrane type-1 domain. 5 consecutive transmembrane segments (helical) span residues 159-179 (FLYIFSLFISQIVALWFSIIL), 189-209 (ITYSFIMMISLVLFQTLSLLM), 262-284 (GILLKIFPSLLNFFTVFIVIIYL), 289-311 (FTLTLFLVIMNLLYMIFSFSLIS), and 385-405 (ICVILMMIFGIYLNQGNLVSI). An ABC transporter domain is found at 464-689 (IILKDISYSY…LLNDSYNSFV (226 aa)). Residue 497-504 (GKSGSGKS) participates in ATP binding.

Belongs to the ABC transporter superfamily.

Its subcellular location is the cell membrane. Probably implicated in the export process of the lantibiotic lacticin-481/lactococcin-DR. This chain is Lacticin-481/lactococcin-DR transport/processing ATP-binding protein lcnDR3 (lcnDR3), found in Lactococcus lactis subsp. lactis (Streptococcus lactis).